The chain runs to 253 residues: Imidazole glycerol phosphate synthase subunit HisF (253 aa).

Active-site residues include Asp-11 and Asp-130.

It belongs to the HisA/HisF family. As to quaternary structure, heterodimer of HisH and HisF.

The protein resides in the cytoplasm. The catalysed reaction is 5-[(5-phospho-1-deoxy-D-ribulos-1-ylimino)methylamino]-1-(5-phospho-beta-D-ribosyl)imidazole-4-carboxamide + L-glutamine = D-erythro-1-(imidazol-4-yl)glycerol 3-phosphate + 5-amino-1-(5-phospho-beta-D-ribosyl)imidazole-4-carboxamide + L-glutamate + H(+). Its pathway is amino-acid biosynthesis; L-histidine biosynthesis; L-histidine from 5-phospho-alpha-D-ribose 1-diphosphate: step 5/9. IGPS catalyzes the conversion of PRFAR and glutamine to IGP, AICAR and glutamate. The HisF subunit catalyzes the cyclization activity that produces IGP and AICAR from PRFAR using the ammonia provided by the HisH subunit. This chain is Imidazole glycerol phosphate synthase subunit HisF, found in Clostridium botulinum (strain Kyoto / Type A2).